The primary structure comprises 362 residues: Chalcone synthase A (362 aa).

Cys-168 is an active-site residue.

This sequence belongs to the thiolase-like superfamily. Chalcone/stilbene synthases family.

The enzyme catalyses (E)-4-coumaroyl-CoA + 3 malonyl-CoA + 3 H(+) = 2',4,4',6'-tetrahydroxychalcone + 3 CO2 + 4 CoA. The protein operates within secondary metabolite biosynthesis; flavonoid biosynthesis. Functionally, the primary product of this enzyme is 4,2',4',6'-tetrahydroxychalcone (also termed naringenin-chalcone or chalcone) which can under specific conditions spontaneously isomerize into naringenin. This chain is Chalcone synthase A (CHSA), found in Ipomoea platensis (Morning glory).